We begin with the raw amino-acid sequence, 320 residues long: Ferrochelatase (320 aa).

Fe cation is bound by residues His-194 and Glu-275.

The protein belongs to the ferrochelatase family.

The protein resides in the cytoplasm. The catalysed reaction is heme b + 2 H(+) = protoporphyrin IX + Fe(2+). It participates in porphyrin-containing compound metabolism; protoheme biosynthesis; protoheme from protoporphyrin-IX: step 1/1. Functionally, catalyzes the ferrous insertion into protoporphyrin IX. This chain is Ferrochelatase, found in Xylella fastidiosa (strain M12).